Reading from the N-terminus, the 961-residue chain is Retinoblastoma-like protein homolog lin-35 (961 aa).

Disordered regions lie at residues 1–43 (MPKR…PPAK) and 55–129 (GGVQ…TPPP). The segment covering 68–81 (ELTQMTIKQETEGN) has biased composition (polar residues). The segment covering 107 to 119 (GEDDDYEEDDADS) has biased composition (acidic residues). Phosphoserine; by CDK4 is present on Ser714. Position 719 is a phosphothreonine; by CDK4 (Thr719).

Belongs to the retinoblastoma protein (RB) family. Component of the DRM complex, at least composed of lin-9, lin-35, lin-37, lin-52, lin-53, lin-54, dpl-1 and efl-1. Interacts with lin-53. Interacts (via C-terminus) with dpl-1 (via C-terminus) and efl-1 (via C-terminus). Interacts (via C-terminus) with lin-8. In terms of processing, phosphorylated by the cyclin dependent kinase cdk-4. Phosphorylation inhibits the transcriptional repressor activity of lin-35 and allows for progression through the G1 phase of the cell cycle during postembryonic development.

The protein resides in the nucleus. Functionally, key regulator of cell division which acts as a transcriptional repressor and negatively regulates cell cycle progression in its active unphosphorylated form, but allows cell cycle progression when phosphorylated. When unphosphorylated and in its active form, interacts with E2F transcription factors such as efl-1 to repress their transcriptional activity and negatively regulate the progression through the G1 phase of the cell cycle during postembryonic development. May furthermore act with cell cycle regulator cki-1 to negatively regulate cell cycle progression. Acts redundantly with lin-53, fzr-1 and lin-23 to control cell cycle progression by regulating the expression of G1 phase cyclins. In particular, negatively regulates the expression of the cyclin E homolog cye-1, which is essential for the G1/S phase transition. Regulates cell division in the intestinal lineage, repressing the expression of genes such as cdc-25.2, which are required for intestinal cells to transition from the karyokinesis cell cycle (also known as nuclear division) to endoreplication, a specific growth pathway in the intestinal epithelium required for feeding and gut development in growing larvae during the L1 stage molt. Its role as a transcriptional repressor in the regulation of intestinal cell division during postembryonic development is most likely in complex with an E2F cell cycle regulatory transcription factor efl-1 and its binding partner the synthetic multivulva class B protein dpl-1. Synthetic multivulva (synMuv) class B protein. SynMuv proteins are required to repress the induction of vulval development by Ras signaling and probably act by forming the multiprotein DRM complex that represses transcription. Together with synMuv class B protein lin-53, and redundantly with synMuv class A protein lin-15A, represses transcription to control vulval development, most likely through antagonization of the Ras-signaling pathway in the major hypodermal syncytium hyp7. Acts redundantly with the transcriptional corepressor spr-1 and the zinc finger protein zfp-2 to play a role in vulval morphogenesis, promote germline proliferation and somatic gonad development. Acts redundantly with ubc-18 in the regulation of pharyngeal morphogenesis during embryonic development by negatively regulating the expression of proteins such as sup-35. Functions with the SWI/SNF complex and proteins such as pha-1 to regulate larval development. Functions redundantly with xnp-1 to regulate somatic gonad development. Acts redundantly with slr-2 to regulate the expression of intestinal genes required for nutrient utilization. Regulates transcription in response to starvation. Furthermore, in response to starvation, promotes germ cell programmed cell death by negatively regulating the expression of the anti-apoptotic protein ced-9. Conversely, in conjunction with mcd-1, efl-1 and the synthetic multivulva class B proteins dpl-1, lin-37 and lin-52, may also regulate transcription to promote programmed cell death independently of ced-1, ced-8 and ced-9 cell death pathways. Directly involved in heterochromatin formation by maintaining overall chromatin structure and, in particular, that of constitutive heterochromatin by stabilizing histone methylation. In particular, negatively regulates the expression of mes-4, a histone methyltransferase that controls the expression of germline specific genes. May play a role in double strand break formation during meiosis. May suppress sensitivity to RNAi. May play a role in the response to endoplasmic reticulum (ER) stress. The protein is Retinoblastoma-like protein homolog lin-35 of Caenorhabditis elegans.